Consider the following 145-residue polypeptide: Ribonuclease P protein component (145 aa).

Residues 120-130 (LPAAPGTMPPA) show a composition bias toward low complexity. Residues 120–145 (LPAAPGTMPPARTMHPSSLSPTEPDL) form a disordered region. Over residues 134–145 (HPSSLSPTEPDL) the composition is skewed to polar residues.

This sequence belongs to the RnpA family. In terms of assembly, consists of a catalytic RNA component (M1 or rnpB) and a protein subunit.

It carries out the reaction Endonucleolytic cleavage of RNA, removing 5'-extranucleotides from tRNA precursor.. Functionally, RNaseP catalyzes the removal of the 5'-leader sequence from pre-tRNA to produce the mature 5'-terminus. It can also cleave other RNA substrates such as 4.5S RNA. The protein component plays an auxiliary but essential role in vivo by binding to the 5'-leader sequence and broadening the substrate specificity of the ribozyme. The sequence is that of Ribonuclease P protein component from Xanthomonas oryzae pv. oryzae (strain MAFF 311018).